We begin with the raw amino-acid sequence, 511 residues long: Maturase K (511 aa).

The protein belongs to the intron maturase 2 family. MatK subfamily.

The protein localises to the plastid. It is found in the chloroplast. In terms of biological role, usually encoded in the trnK tRNA gene intron. Probably assists in splicing its own and other chloroplast group II introns. The protein is Maturase K of Pistia stratiotes (Water lettuce).